We begin with the raw amino-acid sequence, 687 residues long: Glycine--tRNA ligase beta subunit (687 aa).

This sequence belongs to the class-II aminoacyl-tRNA synthetase family. Tetramer of two alpha and two beta subunits.

The protein localises to the cytoplasm. The catalysed reaction is tRNA(Gly) + glycine + ATP = glycyl-tRNA(Gly) + AMP + diphosphate. This chain is Glycine--tRNA ligase beta subunit, found in Geobacter sulfurreducens (strain ATCC 51573 / DSM 12127 / PCA).